Here is a 59-residue protein sequence, read N- to C-terminus: uncharacterized protein (59 aa).

Its subcellular location is the mitochondrion. This is an uncharacterized protein from Ascobolus immersus.